Consider the following 164-residue polypeptide: Large ribosomal subunit protein uL10 (164 aa).

Belongs to the universal ribosomal protein uL10 family. As to quaternary structure, part of the ribosomal stalk of the 50S ribosomal subunit. The N-terminus interacts with L11 and the large rRNA to form the base of the stalk. The C-terminus forms an elongated spine to which L12 dimers bind in a sequential fashion forming a multimeric L10(L12)X complex.

Functionally, forms part of the ribosomal stalk, playing a central role in the interaction of the ribosome with GTP-bound translation factors. In Helicobacter pylori (strain G27), this protein is Large ribosomal subunit protein uL10.